An 848-amino-acid chain; its full sequence is Probable disease resistance protein At5g43730 (848 aa).

Residues Ser25–Lys62 adopt a coiled-coil conformation. In terms of domain architecture, NB-ARC spans Val137–Tyr439. Gly179 to Thr186 is a binding site for ATP. LRR repeat units follow at residues Asn534–Phe555, Lys558–Leu580, Ser582–Arg604, Lys605–Leu627, and Asn629–Glu649.

Belongs to the disease resistance NB-LRR family.

Its function is as follows. Probable disease resistance protein. This Arabidopsis thaliana (Mouse-ear cress) protein is Probable disease resistance protein At5g43730.